The following is a 214-amino-acid chain: Leucyl/phenylalanyl-tRNA--protein transferase (214 aa).

It belongs to the L/F-transferase family.

The protein localises to the cytoplasm. It carries out the reaction N-terminal L-lysyl-[protein] + L-leucyl-tRNA(Leu) = N-terminal L-leucyl-L-lysyl-[protein] + tRNA(Leu) + H(+). The enzyme catalyses N-terminal L-arginyl-[protein] + L-leucyl-tRNA(Leu) = N-terminal L-leucyl-L-arginyl-[protein] + tRNA(Leu) + H(+). The catalysed reaction is L-phenylalanyl-tRNA(Phe) + an N-terminal L-alpha-aminoacyl-[protein] = an N-terminal L-phenylalanyl-L-alpha-aminoacyl-[protein] + tRNA(Phe). Functions in the N-end rule pathway of protein degradation where it conjugates Leu, Phe and, less efficiently, Met from aminoacyl-tRNAs to the N-termini of proteins containing an N-terminal arginine or lysine. This Cereibacter sphaeroides (strain KD131 / KCTC 12085) (Rhodobacter sphaeroides) protein is Leucyl/phenylalanyl-tRNA--protein transferase.